Reading from the N-terminus, the 84-residue chain is NAD(P)H-quinone oxidoreductase subunit O (84 aa).

It belongs to the complex I NdhO subunit family. In terms of assembly, NDH-1 can be composed of about 15 different subunits; different subcomplexes with different compositions have been identified which probably have different functions.

The protein localises to the cellular thylakoid membrane. It carries out the reaction a plastoquinone + NADH + (n+1) H(+)(in) = a plastoquinol + NAD(+) + n H(+)(out). The enzyme catalyses a plastoquinone + NADPH + (n+1) H(+)(in) = a plastoquinol + NADP(+) + n H(+)(out). NDH-1 shuttles electrons from an unknown electron donor, via FMN and iron-sulfur (Fe-S) centers, to quinones in the respiratory and/or the photosynthetic chain. The immediate electron acceptor for the enzyme in this species is believed to be plastoquinone. Couples the redox reaction to proton translocation, and thus conserves the redox energy in a proton gradient. Cyanobacterial NDH-1 also plays a role in inorganic carbon-concentration. The protein is NAD(P)H-quinone oxidoreductase subunit O of Synechococcus sp. (strain CC9605).